Here is a 38-residue protein sequence, read N- to C-terminus: Large ribosomal subunit protein bL36 (38 aa).

Belongs to the bacterial ribosomal protein bL36 family.

The sequence is that of Large ribosomal subunit protein bL36 from Synechocystis sp. (strain ATCC 27184 / PCC 6803 / Kazusa).